The chain runs to 101 residues: Protein Tat (101 aa).

Positions 1 to 20 (MDPVDPNIEPWNQPGSQPKT) are disordered. The tract at residues 1–24 (MDPVDPNIEPWNQPGSQPKTACNQ) is interaction with human CREBBP. Residues 1–48 (MDPVDPNIEPWNQPGSQPKTACNQCYCKRCCYHCQICFLKKGLGISNG) are transactivation. Zn(2+) contacts are provided by Cys-22, Cys-25, and Cys-27. The tract at residues 22–37 (CNQCYCKRCCYHCQIC) is cysteine-rich. N6-acetyllysine; by host PCAF is present on Lys-28. Cys-30, His-33, Cys-34, and Cys-37 together coordinate Zn(2+). The core stretch occupies residues 38-48 (FLKKGLGISNG). The interval 45–101 (ISNGRKKRRPRRTTPYNSENHQDPLRKQPLSQPRGEQTDPKESKKKVESKTKTDQFD) is disordered. The short motif at 49–57 (RKKRRPRRT) is the Nuclear localization signal, RNA-binding (TAR), and protein transduction element. An interaction with the host capping enzyme RNGTT region spans residues 49–86 (RKKRRPRRTTPYNSENHQDPLRKQPLSQPRGEQTDPKE). An N6-acetyllysine; by host EP300 and GCN5L2 mark is found at Lys-50 and Lys-51. Residues Arg-52 and Arg-53 each carry the asymmetric dimethylarginine; by host PRMT6 modification. Lys-71 participates in a covalent cross-link: Glycyl lysine isopeptide (Lys-Gly) (interchain with G-Cter in ubiquitin). Basic and acidic residues predominate over residues 80–101 (EQTDPKESKKKVESKTKTDQFD).

This sequence belongs to the lentiviruses Tat family. As to quaternary structure, interacts with host CCNT1. Associates with the P-TEFb complex composed at least of Tat, P-TEFb (CDK9 and CCNT1), TAR RNA, RNA Pol II. Recruits the HATs CREBBP, TAF1/TFIID, EP300, PCAF and GCN5L2. Interacts with host KAT5/Tip60; this interaction targets the latter to degradation. Interacts with the host deacetylase SIRT1. Interacts with host capping enzyme RNGTT; this interaction stimulates RNGTT. Binds to host KDR, and to the host integrins ITGAV/ITGB3 and ITGA5/ITGB1. Interacts with host KPNB1/importin beta-1 without previous binding to KPNA1/importin alpha-1. Interacts with EIF2AK2. Interacts with host nucleosome assembly protein NAP1L1; this interaction may be required for the transport of Tat within the nucleus, since the two proteins interact at the nuclear rim. Interacts with host C1QBP/SF2P32; this interaction involves lysine-acetylated Tat. Interacts with the host chemokine receptors CCR2, CCR3 and CXCR4. Interacts with host DPP4/CD26; this interaction may trigger an anti-proliferative effect. Interacts with host LDLR. Interacts with the host extracellular matrix metalloproteinase MMP1. Interacts with host PRMT6; this interaction mediates Tat's methylation. Interacts with, and is ubiquitinated by MDM2/Hdm2. Interacts with host PSMC3 and HTATIP2. Interacts with STAB1; this interaction may overcome SATB1-mediated repression of IL2 and IL2RA (interleukin) in T cells by binding to the same domain than HDAC1. Interacts (when acetylated) with human CDK13, thereby increasing HIV-1 mRNA splicing and promoting the production of the doubly spliced HIV-1 protein Nef. Interacts with host TBP; this interaction modulates the activity of transcriptional pre-initiation complex. Interacts with host RELA. Interacts with host PLSCR1; this interaction negatively regulates Tat transactivation activity by altering its subcellular distribution. In terms of processing, asymmetrical arginine methylation by host PRMT6 seems to diminish the transactivation capacity of Tat and affects the interaction with host CCNT1. Post-translationally, acetylation by EP300, CREBBP, GCN5L2/GCN5 and PCAF regulates the transactivation activity of Tat. EP300-mediated acetylation of Lys-50 promotes dissociation of Tat from the TAR RNA through the competitive binding to PCAF's bromodomain. In addition, the non-acetylated Tat's N-terminus can also interact with PCAF. PCAF-mediated acetylation of Lys-28 enhances Tat's binding to CCNT1. Lys-50 is deacetylated by SIRT1. Polyubiquitination by host MDM2 does not target Tat to degradation, but activates its transactivation function and fosters interaction with CCNT1 and TAR RNA. In terms of processing, phosphorylated by EIF2AK2 on serine and threonine residues adjacent to the basic region important for TAR RNA binding and function. Phosphorylation of Tat by EIF2AK2 is dependent on the prior activation of EIF2AK2 by dsRNA.

The protein localises to the host nucleus. It localises to the host nucleolus. Its subcellular location is the host cytoplasm. The protein resides in the secreted. In terms of biological role, transcriptional activator that increases RNA Pol II processivity, thereby increasing the level of full-length viral transcripts. Recognizes a hairpin structure at the 5'-LTR of the nascent viral mRNAs referred to as the transactivation responsive RNA element (TAR) and recruits the cyclin T1-CDK9 complex (P-TEFb complex) that will in turn hyperphosphorylate the RNA polymerase II to allow efficient elongation. The CDK9 component of P-TEFb and other Tat-activated kinases hyperphosphorylate the C-terminus of RNA Pol II that becomes stabilized and much more processive. Other factors such as HTATSF1/Tat-SF1, SUPT5H/SPT5, and HTATIP2 are also important for Tat's function. Besides its effect on RNA Pol II processivity, Tat induces chromatin remodeling of proviral genes by recruiting the histone acetyltransferases (HATs) CREBBP, EP300 and PCAF to the chromatin. This also contributes to the increase in proviral transcription rate, especially when the provirus integrates in transcriptionally silent region of the host genome. To ensure maximal activation of the LTR, Tat mediates nuclear translocation of NF-kappa-B by interacting with host RELA. Through its interaction with host TBP, Tat may also modulate transcription initiation. Tat can reactivate a latently infected cell by penetrating in it and transactivating its LTR promoter. In the cytoplasm, Tat is thought to act as a translational activator of HIV-1 mRNAs. Extracellular circulating Tat can be endocytosed by surrounding uninfected cells via the binding to several surface receptors such as CD26, CXCR4, heparan sulfate proteoglycans (HSPG) or LDLR. Neurons are rarely infected, but they internalize Tat via their LDLR. Through its interaction with nuclear HATs, Tat is potentially able to control the acetylation-dependent cellular gene expression. Modulates the expression of many cellular genes involved in cell survival, proliferation or in coding for cytokines or cytokine receptors. Tat plays a role in T-cell and neurons apoptosis. Tat induced neurotoxicity and apoptosis probably contribute to neuroAIDS. Circulating Tat also acts as a chemokine-like and/or growth factor-like molecule that binds to specific receptors on the surface of the cells, affecting many cellular pathways. In the vascular system, Tat binds to ITGAV/ITGB3 and ITGA5/ITGB1 integrins dimers at the surface of endothelial cells and competes with bFGF for heparin-binding sites, leading to an excess of soluble bFGF. This Homo sapiens (Human) protein is Protein Tat.